We begin with the raw amino-acid sequence, 447 residues long: uncharacterized protein (447 aa).

The next 2 membrane-spanning stretches (helical) occupy residues 380–400 and 412–432; these read VLEIGIFGVYALEAAHILLLT and ILGFPLEFWIILVVTILGVYV.

Its subcellular location is the cell membrane. This is an uncharacterized protein from Methanocaldococcus jannaschii (strain ATCC 43067 / DSM 2661 / JAL-1 / JCM 10045 / NBRC 100440) (Methanococcus jannaschii).